We begin with the raw amino-acid sequence, 421 residues long: Bestrophin homolog 2 (421 aa).

Transmembrane regions (helical) follow at residues 28–48, 73–93, 239–259, and 275–295; these read IWKA…IISV, LSFI…VDRW, LMYP…SIIA, and VYFP…LKVI.

This sequence belongs to the anion channel-forming bestrophin (TC 1.A.46) family. Calcium-sensitive chloride channel subfamily. Forms oligomers.

The protein localises to the cell membrane. Forms chloride channels. This chain is Bestrophin homolog 2 (best-2), found in Caenorhabditis elegans.